The following is a 329-amino-acid chain: NAD kinase (329 aa).

The segment at 1–26 is disordered; that stretch reads MTTPGTDHNADQGADSGDKATKAASG. The active-site Proton acceptor is the aspartate 104. NAD(+)-binding positions include 104 to 105, arginine 109, 179 to 180, aspartate 209, and 220 to 225; these read DG, NE, and TAYAFS.

The protein belongs to the NAD kinase family. A divalent metal cation is required as a cofactor.

The protein localises to the cytoplasm. It catalyses the reaction NAD(+) + ATP = ADP + NADP(+) + H(+). Its function is as follows. Involved in the regulation of the intracellular balance of NAD and NADP, and is a key enzyme in the biosynthesis of NADP. Catalyzes specifically the phosphorylation on 2'-hydroxyl of the adenosine moiety of NAD to yield NADP. In Corynebacterium jeikeium (strain K411), this protein is NAD kinase.